We begin with the raw amino-acid sequence, 200 residues long: Nucleoside triphosphate pyrophosphatase (200 aa).

Asp75 acts as the Proton acceptor in catalysis.

This sequence belongs to the Maf family. It depends on a divalent metal cation as a cofactor.

It is found in the cytoplasm. The enzyme catalyses a ribonucleoside 5'-triphosphate + H2O = a ribonucleoside 5'-phosphate + diphosphate + H(+). It carries out the reaction a 2'-deoxyribonucleoside 5'-triphosphate + H2O = a 2'-deoxyribonucleoside 5'-phosphate + diphosphate + H(+). Functionally, nucleoside triphosphate pyrophosphatase. May have a dual role in cell division arrest and in preventing the incorporation of modified nucleotides into cellular nucleic acids. The polypeptide is Nucleoside triphosphate pyrophosphatase (Synechococcus sp. (strain CC9311)).